We begin with the raw amino-acid sequence, 613 residues long: Transcription factor MTB1 (613 aa).

Residues 48–130 (LQNKLSDLVE…RVLQKLHMLF (83 aa)) form a JAZ-interaction domain region. Disordered regions lie at residues 256 to 285 (EKNE…FGHD) and 391 to 441 (AHNV…AERQ). The span at 260–270 (GNNPRLSNSGA) shows a compositional bias: polar residues. Basic and acidic residues-rich tracts occupy residues 394–417 (VESE…DEKR) and 427–441 (NGRE…AERQ). Positions 430 to 443 (EEPLNHVEAERQRR) are basic motif; degenerate. The bHLH domain maps to 430 to 479 (EEPLNHVEAERQRREKLNQRFYALRAVVPNISKMDKASLLGDAIAYITEL). Residues 444–479 (EKLNQRFYALRAVVPNISKMDKASLLGDAIAYITEL) form a helix-loop-helix motif region. Positions 490–513 (RELRLGSTSRDAITSEDSPSSEIQ) are disordered. A compositionally biased stretch (polar residues) spans 495–512 (GSTSRDAITSEDSPSSEI).

As to quaternary structure, interacts with MYC2 (via N-terminus). MTB1 competes with MED25 for binding to MYC2. Interacts (via N-terminus) with JAZ7.

Its subcellular location is the nucleus. Transcription factor that negatively regulates jasmonate (JA) signaling. Negatively regulates JA-dependent response to wounding, JA-induced expression of defense genes, JA-dependent responses against herbivorous insects, and JA-dependent resistance against Botrytis cinerea infection. Plays a positive role in resistance against the bacterial pathogen Pseudomonas syringae pv tomato DC3000. The sequence is that of Transcription factor MTB1 from Solanum lycopersicum (Tomato).